Reading from the N-terminus, the 326-residue chain is Eukaryotic translation initiation factor 3 subunit I (326 aa).

WD repeat units follow at residues 8 to 47, 50 to 89, 145 to 184, 188 to 227, and 285 to 326; these read GHERSITQIKYNREGDLLFSCSKDQKPNVWYSLNGERLGT, GHQGAVWCLDVDWESRKLITGAGDMTAKIWDVEYGTVIAS, MTESKITSMLWGPLDETIITGHDNGNIAIWDIRKGQKVVD, DHSAGINDMQLSKDGTMFVTASRDTTAKLFDSESLMCLKT, and GHFG…NIFE.

This sequence belongs to the eIF-3 subunit I family. Component of the eukaryotic translation initiation factor 3 (eIF-3) complex. The eIF-3 complex interacts with pix.

Its subcellular location is the cytoplasm. Functionally, component of the eukaryotic translation initiation factor 3 (eIF-3) complex, which is involved in protein synthesis of a specialized repertoire of mRNAs and, together with other initiation factors, stimulates binding of mRNA and methionyl-tRNAi to the 40S ribosome. The eIF-3 complex specifically targets and initiates translation of a subset of mRNAs involved in cell proliferation. This chain is Eukaryotic translation initiation factor 3 subunit I, found in Drosophila simulans (Fruit fly).